The primary structure comprises 138 residues: Membrane protein P8A7 (138 aa).

A run of 4 helical transmembrane segments spans residues 12 to 30, 32 to 56, 71 to 90, and 93 to 118; these read ILVILAGCFITACGIYLFV, GLFHSIIGFVLGIYYLLAGVCIVLL, YTYWFGKGALISLIGLLILG, and GFFLAAGIIVIAVGIVCMIFHFLLGC.

It is found in the membrane. This Dictyostelium discoideum (Social amoeba) protein is Membrane protein P8A7 (pmpA).